Reading from the N-terminus, the 113-residue chain is Large ribosomal subunit protein uL22 (113 aa).

This sequence belongs to the universal ribosomal protein uL22 family. As to quaternary structure, part of the 50S ribosomal subunit.

This protein binds specifically to 23S rRNA; its binding is stimulated by other ribosomal proteins, e.g. L4, L17, and L20. It is important during the early stages of 50S assembly. It makes multiple contacts with different domains of the 23S rRNA in the assembled 50S subunit and ribosome. Its function is as follows. The globular domain of the protein is located near the polypeptide exit tunnel on the outside of the subunit, while an extended beta-hairpin is found that lines the wall of the exit tunnel in the center of the 70S ribosome. In Halalkalibacterium halodurans (strain ATCC BAA-125 / DSM 18197 / FERM 7344 / JCM 9153 / C-125) (Bacillus halodurans), this protein is Large ribosomal subunit protein uL22.